Reading from the N-terminus, the 160-residue chain is Transcription antitermination protein NusB (160 aa).

This sequence belongs to the NusB family.

In terms of biological role, involved in transcription antitermination. Required for transcription of ribosomal RNA (rRNA) genes. Binds specifically to the boxA antiterminator sequence of the ribosomal RNA (rrn) operons. The chain is Transcription antitermination protein NusB from Gluconobacter oxydans (strain 621H) (Gluconobacter suboxydans).